A 249-amino-acid polypeptide reads, in one-letter code: Protein TIFY 10B (249 aa).

A Tify domain is found at 113–148 (PESQSAPLTIFYGGRVMVFDDFSAEKAKEVIDLANK). Positions 204-229 (PIARRASLHRFLEKRKDRITSKAPYQ) match the Jas motif. The Nuclear localization signal motif lies at 206–213 (ARRASLHR). The disordered stretch occupies residues 225-249 (KAPYQIDGSAEASSKPTNPAWLSSR). Residues 235-249 (EASSKPTNPAWLSSR) are compositionally biased toward polar residues.

Belongs to the TIFY/JAZ family. Homo- and heterodimer. Interacts with COI1, MYC2, MYC3, MYC4, AFPH2/NINJA, TIFY10A/JAZ1, TIFY6B/JAZ3, TIFY11A/JAZ5, TIFY11B/JAZ6, TIFY5A/JAZ8, TIFY7/JAZ9, TIFY9/JAZ10, TIFY3A/JAZ11 and TIFY3B/JAZ12. Interacts with RHD6 and RSL1. As to quaternary structure, (Microbial infection) Interacts with the pathogenic Pseudomonas syringae HopZ1a protein. (Microbial infection) Acetylated by Pseudomonas syringae HopZ1a. Post-translationally, ubiquitinated. Targeted for degradation by the SCF(COI1) E3 ubiquitin ligase-proteasome pathway during jasmonate signaling. Expressed in cotyledons, hypocotyls, roots, sepals, petal vascular tissue and stigmas of developing flowers. Expressed in stamen filaments after jasmonic acid treatment.

The protein localises to the nucleus. In terms of biological role, repressor of jasmonate responses. Jasmonoyl-isoleucine (JA-Ile) specifically promotes COI1-TIFY10B/JAZ2 interaction. Activated by MYC2, MYC3 and MYC4 transcription factors. Interacts with and suppresses RHD6 and RSL1 transcription factor activities to negatively regulate jasmonate-stimulated root hair development. This is Protein TIFY 10B from Arabidopsis thaliana (Mouse-ear cress).